The chain runs to 504 residues: ATP synthase subunit beta (504 aa).

181–188 (GGAGVGKT) lines the ATP pocket.

It belongs to the ATPase alpha/beta chains family. In terms of assembly, F-type ATPases have 2 components, CF(1) - the catalytic core - and CF(0) - the membrane proton channel. CF(1) has five subunits: alpha(3), beta(3), gamma(1), delta(1), epsilon(1). CF(0) has three main subunits: a(1), b(2) and c(9-12). The alpha and beta chains form an alternating ring which encloses part of the gamma chain. CF(1) is attached to CF(0) by a central stalk formed by the gamma and epsilon chains, while a peripheral stalk is formed by the delta and b chains.

The protein resides in the cell inner membrane. The enzyme catalyses ATP + H2O + 4 H(+)(in) = ADP + phosphate + 5 H(+)(out). Functionally, produces ATP from ADP in the presence of a proton gradient across the membrane. The catalytic sites are hosted primarily by the beta subunits. The polypeptide is ATP synthase subunit beta (Ehrlichia ruminantium (strain Gardel)).